Consider the following 367-residue polypeptide: Mitogen-activated protein kinase 12 (367 aa).

Positions 27–311 constitute a Protein kinase domain; it reads YQDLQPVGSG…AAEALTHPYF (285 aa). ATP-binding positions include 33–41 and lysine 56; that span reads VGSGAYGAV. Residue aspartate 153 is the Proton acceptor of the active site. At threonine 183 the chain carries Phosphothreonine. The short motif at 183-185 is the TXY element; sequence TGY. Residue tyrosine 185 is modified to Phosphotyrosine.

It belongs to the protein kinase superfamily. CMGC Ser/Thr protein kinase family. MAP kinase subfamily. As to quaternary structure, monomer. Interacts with the PDZ domain of the syntrophin SNTA1. Interacts with SH3BP5, LIN7C, SCRIB and SYNJ2BP. Interacts with PTPN4; this interaction induces the activation of PTPN4 phosphatase activity. Requires Mg(2+) as cofactor. Post-translationally, dually phosphorylated on Thr-183 and Tyr-185 by MAP2K3/MKK3 and MAP2K6/MKK6, which activates the enzyme. Ubiquitinated. Ubiquitination leads to degradation by the proteasome pathway. As to expression, highly expressed in skeletal muscle. Also expressed in the heart, particularly in cardiac myocytes, lung, thymus and testes.

Its subcellular location is the cytoplasm. The protein localises to the nucleus. The protein resides in the mitochondrion. The enzyme catalyses L-seryl-[protein] + ATP = O-phospho-L-seryl-[protein] + ADP + H(+). It carries out the reaction L-threonyl-[protein] + ATP = O-phospho-L-threonyl-[protein] + ADP + H(+). Its activity is regulated as follows. Activated by phosphorylation on threonine and tyrosine. MAP2K3/MKK3 and MAP2K6/MKK6 are both essential for the activation of MAPK12 induced by environmental stress, whereas MAP2K6/MKK6 is the major MAPK12 activator in response to TNF-alpha. Serine/threonine kinase which acts as an essential component of the MAP kinase signal transduction pathway. MAPK12 is one of the four p38 MAPKs which play an important role in the cascades of cellular responses evoked by extracellular stimuli such as pro-inflammatory cytokines or physical stress leading to direct activation of transcription factors such as ELK1 and ATF2. Accordingly, p38 MAPKs phosphorylate a broad range of proteins and it has been estimated that they may have approximately 200 to 300 substrates each. Some of the targets are downstream kinases such as MAPKAPK2, which are activated through phosphorylation and further phosphorylate additional targets. Plays a role in myoblast differentiation and also in the down-regulation of cyclin D1 in response to hypoxia in adrenal cells suggesting MAPK12 may inhibit cell proliferation while promoting differentiation. Phosphorylates DLG1. Following osmotic shock, MAPK12 in the cell nucleus increases its association with nuclear DLG1, thereby causing dissociation of DLG1-SFPQ complexes. This function is independent of its catalytic activity and could affect mRNA processing and/or gene transcription to aid cell adaptation to osmolarity changes in the environment. Regulates UV-induced checkpoint signaling and repair of UV-induced DNA damage and G2 arrest after gamma-radiation exposure. MAPK12 is involved in the regulation of SLC2A1 expression and basal glucose uptake in L6 myotubes; and negatively regulates SLC2A4 expression and contraction-mediated glucose uptake in adult skeletal muscle. C-Jun (JUN) phosphorylation is stimulated by MAPK14 and inhibited by MAPK12, leading to a distinct AP-1 regulation. MAPK12 is required for the normal kinetochore localization of PLK1, prevents chromosomal instability and supports mitotic cell viability. MAPK12-signaling is also positively regulating the expansion of transient amplifying myogenic precursor cells during muscle growth and regeneration. This Mus musculus (Mouse) protein is Mitogen-activated protein kinase 12 (Mapk12).